Here is a 3364-residue protein sequence, read N- to C-terminus: Salivary gland surface protein 1 (3364 aa).

2 beta-propeller regions span residues 1–344 and 705–1216; these read MLRI…VVDA and FEQE…LKAL. Residue asparagine 59 is glycosylated (N-linked (GlcNAc...) asparagine). 2 disulfides stabilise this stretch: cysteine 251–cysteine 297 and cysteine 1128–cysteine 1139. The tract at residues 345–2733 is rhs/YD-repeats; sequence VEPKLDQGSP…PVSQIDPDGQ (2389 aa). Asparagine 1149 carries N-linked (GlcNAc...) asparagine glycosylation. The interval 1345 to 1494 is carbohydrate-binding module (CBM); sequence NQELVQFLGF…VHVDHVRLSP (150 aa). The segment at 1575-1715 is lectin carbohydrate-recognition domain (lectin-CRD); it reads HSWVESFSPY…VGIKDVIVME (141 aa). The wedge domain stretch occupies residues 2225-2304; the sequence is HDKCDQNLIP…SEKMLEQGYP (80 aa). Cystine bridges form between cysteine 2253–cysteine 2285 and cysteine 2407–cysteine 2421. A run of 5 helical transmembrane segments spans residues 2734-2754, 2774-2794, 2805-2825, 2844-2864, and 2878-2898; these read IAVT…LGAA, IGLF…AATF, MIAG…LGAA, WNGL…FVGI, and MIYA…GGGM. Residues 3126-3216 are tox-SGS; it reads YSPDSDGNQI…ARIAPAALRN (91 aa).

In terms of processing, probably cleaved at the C-terminus. In terms of tissue distribution, female saliva (at protein level). Female salivary gland (at protein level). Not detected in female carcass without salivary glands. Not detected in male tissues.

It is found in the cell membrane. Its subcellular location is the secreted. Functionally, (Microbial infection) Facilitates, but is not essential for, invasion of salivary glands by Plasmodium gallinaceum. Plays a role in Plasmodium gallinaceum oocyst development in mosquito midgut. In terms of biological role, (Microbial infection) Probably facilitates Zika virus replication in salivary glands. The protein is Salivary gland surface protein 1 of Aedes aegypti (Yellowfever mosquito).